Reading from the N-terminus, the 166-residue chain is S-phase kinase-associated protein 1 homolog (166 aa).

The interaction with the F-box domain of F-box proteins stretch occupies residues I105 to S166.

It belongs to the SKP1 family. In terms of assembly, component of multiple SCF (SKP1-CUL1-F-box) E3 ubiquitin-protein ligase complexes formed of CUL1, SKP1, RBX1 and a variable F-box domain-containing protein as substrate-specific subunit.

It functions in the pathway protein modification; protein ubiquitination. Essential component of the SCF (SKP1-CUL1-F-box protein) ubiquitin ligase complex, which mediates the ubiquitination of proteins involved in cell cycle progression, signal transduction and transcription. In the SCF complex, serves as an adapter that links the F-box protein to CUL1. The functional specificity of the SCF complex depends on the F-box protein as substrate recognition component. Its association with the holoenzyme telomerase ribonucleoprotein complex suggests that it may play a role in turnover of holoenzyme telomerase complex components. The polypeptide is S-phase kinase-associated protein 1 homolog (Tetrahymena thermophila (strain SB210)).